The primary structure comprises 296 residues: MYLQLLKSLNRVHPRAWDFIQLSRMDRPIGIYLLLWPTLTAVWIAGLGSPTLANVLIFGLGVVLMRAAGCCINDFADRKVDGHVKRTADRPLASGRVKPREALALFGILVAVSFLLVLCTNSKTVWLSFGAVALAFCYPFMKRYTYYPQVVLGAAYSWGIPMAFTAAGGELPASAWLLYIANLLWTVGYDTYYAMVDRDDDLKIGVKSTAILFGESDRMIILTLQMLSLGCLLLAGSRFELGGWFHLGLLGAALCFAWEYWSTRKLDRESCFKAFLHNHWAGLLVFMGVVLDYALR.

The next 8 membrane-spanning stretches (helical) occupy residues 28 to 48, 52 to 72, 102 to 122, 145 to 167, 174 to 196, 219 to 239, 241 to 261, and 275 to 295; these read PIGIYLLLWPTLTAVWIAGLG, LANVLIFGLGVVLMRAAGCCI, ALALFGILVAVSFLLVLCTNS, TYYPQVVLGAAYSWGIPMAFTAA, SAWLLYIANLLWTVGYDTYYAMV, MIILTLQMLSLGCLLLAGSRF, LGGWFHLGLLGAALCFAWEYW, and FLHNHWAGLLVFMGVVLDYAL.

It belongs to the UbiA prenyltransferase family. Mg(2+) serves as cofactor.

It localises to the cell inner membrane. The catalysed reaction is all-trans-octaprenyl diphosphate + 4-hydroxybenzoate = 4-hydroxy-3-(all-trans-octaprenyl)benzoate + diphosphate. It participates in cofactor biosynthesis; ubiquinone biosynthesis. Its function is as follows. Catalyzes the prenylation of para-hydroxybenzoate (PHB) with an all-trans polyprenyl group. Mediates the second step in the final reaction sequence of ubiquinone-8 (UQ-8) biosynthesis, which is the condensation of the polyisoprenoid side chain with PHB, generating the first membrane-bound Q intermediate 3-octaprenyl-4-hydroxybenzoate. This chain is 4-hydroxybenzoate octaprenyltransferase, found in Pseudomonas putida (strain W619).